A 538-amino-acid chain; its full sequence is Zinc finger protein with KRAB and SCAN domains 3 (538 aa).

Position 42 is a phosphoserine (Ser-42). The region spanning 46-128 (RERFRGFRYP…VLLEYLERQL (83 aa)) is the SCAN box domain. A Glycyl lysine isopeptide (Lys-Gly) (interchain with G-Cter in SUMO2) cross-link involves residue Lys-171. Position 207 is a phosphothreonine (Thr-207). Residues 214–274 (LKVEDVALTL…PAEELPEKEH (61 aa)) enclose the KRAB domain. The segment covering 226–236 (EWTQQDSSQGN) has biased composition (polar residues). The tract at residues 226–274 (EWTQQDSSQGNLCRDEKQENHGSLVSLGDEKQTKSRDLPPAEELPEKEH) is disordered. Residues 253-274 (GDEKQTKSRDLPPAEELPEKEH) show a composition bias toward basic and acidic residues. 5 C2H2-type zinc fingers span residues 314–336 (HICH…RRIH), 342–364 (YECE…QRVH), 370–392 (YECE…QRTH), 398–420 (YECD…HRIH), and 426–448 (YQCS…QRIH). A Phosphothreonine modification is found at Thr-449. 2 C2H2-type zinc fingers span residues 480–502 (YKCN…QKIH) and 508–530 (YQCN…QRSH).

The protein belongs to the krueppel C2H2-type zinc-finger protein family.

It is found in the nucleus. The protein localises to the cytoplasm. Functionally, transcriptional factor that binds to the consensus sequence 5'-[GT][AG][AGT]GGGG-3' and acts as a repressor of autophagy. Specifically represses expression of genes involved in autophagy and lysosome biogenesis/function such as MAP1LC3B, ULK1 or WIPI2. Associates with chromatin at the ITGB4 and VEGF promoters. Also acts as a transcription activator and promotes cancer cell progression and/or migration in various tumors and myelomas. The chain is Zinc finger protein with KRAB and SCAN domains 3 (ZKSCAN3) from Homo sapiens (Human).